Reading from the N-terminus, the 464-residue chain is ATP synthase subunit beta (464 aa).

150 to 157 contributes to the ATP binding site; the sequence is GGAGVGKT.

It belongs to the ATPase alpha/beta chains family. In terms of assembly, F-type ATPases have 2 components, CF(1) - the catalytic core - and CF(0) - the membrane proton channel. CF(1) has five subunits: alpha(3), beta(3), gamma(1), delta(1), epsilon(1). CF(0) has three main subunits: a(1), b(2) and c(9-12). The alpha and beta chains form an alternating ring which encloses part of the gamma chain. CF(1) is attached to CF(0) by a central stalk formed by the gamma and epsilon chains, while a peripheral stalk is formed by the delta and b chains.

It localises to the cell membrane. The catalysed reaction is ATP + H2O + 4 H(+)(in) = ADP + phosphate + 5 H(+)(out). Functionally, produces ATP from ADP in the presence of a proton gradient across the membrane. The catalytic sites are hosted primarily by the beta subunits. In Dehalococcoides mccartyi (strain ATCC BAA-2100 / JCM 16839 / KCTC 5957 / BAV1), this protein is ATP synthase subunit beta.